The following is a 276-amino-acid chain: NAD-capped RNA hydrolase NudC (276 aa).

Arg-82 contacts substrate. Residues Cys-112 and Cys-115 each coordinate Zn(2+). Glu-125 contacts substrate. 2 residues coordinate Zn(2+): Cys-130 and Cys-133. Tyr-138 contributes to the substrate binding site. The Nudix hydrolase domain occupies 139–262 (PRISPSMIVL…SIARYLIDLY (124 aa)). 3 residues coordinate a divalent metal cation: Ala-172, Glu-188, and Glu-192. Positions 173–194 (GFAEPGESAEDCLVREVREEVA) match the Nudix box motif. 206 to 213 (QCWPFPHS) is a substrate binding site. Residue Glu-233 participates in a divalent metal cation binding. Ala-255 serves as a coordination point for substrate.

Belongs to the Nudix hydrolase family. NudC subfamily. In terms of assembly, homodimer. It depends on Mg(2+) as a cofactor. The cofactor is Mn(2+). Zn(2+) serves as cofactor.

It catalyses the reaction a 5'-end NAD(+)-phospho-ribonucleoside in mRNA + H2O = a 5'-end phospho-adenosine-phospho-ribonucleoside in mRNA + beta-nicotinamide D-ribonucleotide + 2 H(+). It carries out the reaction NAD(+) + H2O = beta-nicotinamide D-ribonucleotide + AMP + 2 H(+). The catalysed reaction is NADH + H2O = reduced beta-nicotinamide D-ribonucleotide + AMP + 2 H(+). In terms of biological role, mRNA decapping enzyme that specifically removes the nicotinamide adenine dinucleotide (NAD) cap from a subset of mRNAs by hydrolyzing the diphosphate linkage to produce nicotinamide mononucleotide (NMN) and 5' monophosphate mRNA. The NAD-cap is present at the 5'-end of some mRNAs and stabilizes RNA against 5'-processing. Has preference for mRNAs with a 5'-end purine. Catalyzes the hydrolysis of a broad range of dinucleotide pyrophosphates. This Pseudomonas putida (strain ATCC 700007 / DSM 6899 / JCM 31910 / BCRC 17059 / LMG 24140 / F1) protein is NAD-capped RNA hydrolase NudC.